A 644-amino-acid chain; its full sequence is Chaperone protein DnaK (644 aa).

The residue at position 200 (Thr-200) is a Phosphothreonine; by autocatalysis. The interval 603–644 (VMAAEQAKSGGAAPGAAPGGAQQAAPDADVVDADFKEVDDKK) is disordered. A compositionally biased stretch (low complexity) spans 612–630 (GGAAPGAAPGGAQQAAPDA). The span at 635 to 644 (ADFKEVDDKK) shows a compositional bias: basic and acidic residues.

This sequence belongs to the heat shock protein 70 family.

Functionally, acts as a chaperone. The protein is Chaperone protein DnaK of Polynucleobacter asymbioticus (strain DSM 18221 / CIP 109841 / QLW-P1DMWA-1) (Polynucleobacter necessarius subsp. asymbioticus).